Here is a 158-residue protein sequence, read N- to C-terminus: Ribosomal RNA large subunit methyltransferase H (158 aa).

S-adenosyl-L-methionine is bound by residues leucine 73, glycine 107, and 126-131 (FGEITL).

Belongs to the RNA methyltransferase RlmH family. Homodimer.

It is found in the cytoplasm. The catalysed reaction is pseudouridine(1915) in 23S rRNA + S-adenosyl-L-methionine = N(3)-methylpseudouridine(1915) in 23S rRNA + S-adenosyl-L-homocysteine + H(+). Its function is as follows. Specifically methylates the pseudouridine at position 1915 (m3Psi1915) in 23S rRNA. In Rubrobacter xylanophilus (strain DSM 9941 / JCM 11954 / NBRC 16129 / PRD-1), this protein is Ribosomal RNA large subunit methyltransferase H.